A 497-amino-acid polypeptide reads, in one-letter code: Arabinose import ATP-binding protein AraG (497 aa).

2 ABC transporter domains span residues 6–242 (LRFD…MVGR) and 250–497 (FRPR…ALPA). Residue 38–45 (GENGAGKS) coordinates ATP.

This sequence belongs to the ABC transporter superfamily. Arabinose importer (TC 3.A.1.2.2) family. As to quaternary structure, the complex is composed of two ATP-binding proteins (AraG), two transmembrane proteins (AraH) and a solute-binding protein (AraF).

It is found in the cell inner membrane. The catalysed reaction is L-arabinose(out) + ATP + H2O = L-arabinose(in) + ADP + phosphate + H(+). Part of the ABC transporter complex AraFGH involved in arabinose import. Responsible for energy coupling to the transport system. This Chromohalobacter salexigens (strain ATCC BAA-138 / DSM 3043 / CIP 106854 / NCIMB 13768 / 1H11) protein is Arabinose import ATP-binding protein AraG.